A 560-amino-acid polypeptide reads, in one-letter code: Bifunctional NAD(P)H-hydrate repair enzyme (560 aa).

Residues 1-241 are NAD(P)H-hydrate epimerase; sequence MLSRLSERCT…WMTAPERMRV (241 aa). The region spanning 29 to 235 is the YjeF N-terminal domain; it reads LRDAEPAAAA…SLGLEDWMTA (207 aa). Positions 77-81 are NADPHX 1; for epimerase activity; sequence NNGGD. Residues Asn78 and Asp145 each contribute to the K(+) site. An NADPHX 1; for epimerase activity region spans residues 149–155; it reads GTGICGP. 2 residues coordinate (6S)-NADPHX: Tyr160 and Asp178. Residue Ser181 participates in K(+) binding. The YjeF C-terminal domain occupies 249–547; it reads LDDVYEYFGI…HRVPLIVNAS (299 aa). Residues 249 to 560 form an ADP-dependent (S)-NAD(P)H-hydrate dehydratase region; the sequence is LDDVYEYFGI…PASRQRPSGQ (312 aa). Gly351 is a binding site for (6S)-NADPHX. Residues 417–423 are NADPHX 2; for dehydratase activity; sequence HPGEAAR. ADP is bound by residues 454–458 and 475–484; these read KGPGT and NAGMASGGMG. Asp485 provides a ligand contact to (6S)-NADPHX.

This sequence in the N-terminal section; belongs to the NnrE/AIBP family. The protein in the C-terminal section; belongs to the NnrD/CARKD family. Requires K(+) as cofactor.

The catalysed reaction is (6S)-NADHX + ADP = AMP + phosphate + NADH + H(+). The enzyme catalyses (6S)-NADPHX + ADP = AMP + phosphate + NADPH + H(+). It catalyses the reaction (6R)-NADHX = (6S)-NADHX. It carries out the reaction (6R)-NADPHX = (6S)-NADPHX. In terms of biological role, bifunctional enzyme that catalyzes the epimerization of the S- and R-forms of NAD(P)HX and the dehydration of the S-form of NAD(P)HX at the expense of ADP, which is converted to AMP. This allows the repair of both epimers of NAD(P)HX, a damaged form of NAD(P)H that is a result of enzymatic or heat-dependent hydration. In Leishmania major, this protein is Bifunctional NAD(P)H-hydrate repair enzyme.